The following is a 362-amino-acid chain: Peptide chain release factor 1 (362 aa).

Residue glutamine 237 is modified to N5-methylglutamine.

It belongs to the prokaryotic/mitochondrial release factor family. Methylated by PrmC. Methylation increases the termination efficiency of RF1.

It localises to the cytoplasm. Its function is as follows. Peptide chain release factor 1 directs the termination of translation in response to the peptide chain termination codons UAG and UAA. In Marinomonas sp. (strain MWYL1), this protein is Peptide chain release factor 1.